The chain runs to 178 residues: uncharacterized protein (178 aa).

The next 3 helical transmembrane spans lie at 15–35 (ILGW…LLKF), 80–100 (FNGG…VGLA), and 158–178 (YILP…LGFI).

It to Y.pestis YfeE.

The protein localises to the cell membrane. This is an uncharacterized protein from Escherichia coli (strain K12).